Here is a 472-residue protein sequence, read N- to C-terminus: Poly(A) polymerase catalytic subunit (472 aa).

Residues Asp191 and Asp193 contribute to the active site.

It belongs to the poxviridae poly(A) polymerase catalytic subunit family. In terms of assembly, heterodimer of a large (catalytic) subunit and a small (regulatory) subunit.

It carries out the reaction RNA(n) + ATP = RNA(n)-3'-adenine ribonucleotide + diphosphate. Functionally, polymerase that creates the 3'-poly(A) tail of mRNA's. The protein is Poly(A) polymerase catalytic subunit (PAPL) of Capra hircus (Goat).